Here is a 528-residue protein sequence, read N- to C-terminus: Protein BFR2 (528 aa).

Disordered regions lie at residues asparagine 14–lysine 158 and aspartate 372–isoleucine 401. Acidic residues predominate over residues aspartate 132–glutamate 146.

This sequence belongs to the AATF family.

Its subcellular location is the nucleus. The protein resides in the nucleolus. In Eremothecium gossypii (strain ATCC 10895 / CBS 109.51 / FGSC 9923 / NRRL Y-1056) (Yeast), this protein is Protein BFR2 (BFR2).